Consider the following 313-residue polypeptide: Putative S-adenosyl-L-methionine-dependent methyltransferase MAP_3563 (313 aa).

S-adenosyl-L-methionine contacts are provided by residues aspartate 139 and 168–169; that span reads DL.

This sequence belongs to the UPF0677 family.

Its function is as follows. Exhibits S-adenosyl-L-methionine-dependent methyltransferase activity. The protein is Putative S-adenosyl-L-methionine-dependent methyltransferase MAP_3563 of Mycolicibacterium paratuberculosis (strain ATCC BAA-968 / K-10) (Mycobacterium paratuberculosis).